The primary structure comprises 120 residues: Large ribosomal subunit protein bL17 (120 aa).

Belongs to the bacterial ribosomal protein bL17 family. Part of the 50S ribosomal subunit. Contacts protein L32.

The sequence is that of Large ribosomal subunit protein bL17 from Bacillus cereus (strain ATCC 14579 / DSM 31 / CCUG 7414 / JCM 2152 / NBRC 15305 / NCIMB 9373 / NCTC 2599 / NRRL B-3711).